The primary structure comprises 165 residues: Methylated-DNA--protein-cysteine methyltransferase (165 aa).

The active-site Nucleophile; methyl group acceptor is Cys-126.

Belongs to the MGMT family.

The protein resides in the cytoplasm. The catalysed reaction is a 6-O-methyl-2'-deoxyguanosine in DNA + L-cysteinyl-[protein] = S-methyl-L-cysteinyl-[protein] + a 2'-deoxyguanosine in DNA. It carries out the reaction a 4-O-methyl-thymidine in DNA + L-cysteinyl-[protein] = a thymidine in DNA + S-methyl-L-cysteinyl-[protein]. Its function is as follows. Involved in the cellular defense against the biological effects of O6-methylguanine (O6-MeG) and O4-methylthymine (O4-MeT) in DNA. Repairs the methylated nucleobase in DNA by stoichiometrically transferring the methyl group to a cysteine residue in the enzyme. This is a suicide reaction: the enzyme is irreversibly inactivated. The sequence is that of Methylated-DNA--protein-cysteine methyltransferase from Mycobacterium bovis (strain ATCC BAA-935 / AF2122/97).